The following is a 435-amino-acid chain: Membrane-bound ghrelin O-acyltransferase MBOAT4 (435 aa).

The Lumenal segment spans residues 1–5 (MDWLQ). Residues 6–26 (LFFLHPLSFYQGAAFPFALLF) traverse the membrane as a helical segment. The Cytoplasmic segment spans residues 27–40 (NYLCILDTFSTRAR). The chain crosses the membrane as a helical span at residues 41-56 (YLFLLAGGGVLAFAAM). Residues 57–59 (GPY) are Lumenal-facing. A helical membrane pass occupies residues 60–76 (SLLIFIPALCAVALVSF). Residues 77 to 82 (LSPQEV) lie on the Cytoplasmic side of the membrane. A helical transmembrane segment spans residues 83–101 (HRLTFFFQMGWQTLCHLGL). The Lumenal segment spans residues 102–120 (HYTEYYLGEPPPVRFYITL). A helical transmembrane segment spans residues 121–136 (SSLMLLTQRVTSLSLD). Topologically, residues 137–206 (ICEGKVEAPR…YPSISFRALT (70 aa)) are cytoplasmic. Residues 207 to 227 (WRGLQILGLECLKVALRSAVS) traverse the membrane as a helical segment. The Lumenal segment spans residues 228 to 240 (AGAGLDDCQRLEC). Residues 241–261 (IYLMWSTAWLFKLTYYSHWIL) traverse the membrane as a helical segment. Topologically, residues 262-324 (DDSLLHAAGF…RRLVFRKSRR (63 aa)) are cytoplasmic. Active-site residues include N307 and H338. A helical transmembrane segment spans residues 325 to 338 (WPLLQTFAFSAWWH). Over 339–340 (GL) the chain is Lumenal. The helical transmembrane segment at 341-357 (HPGQVFGFLCWSVMVKA) threads the bilayer. At 358–376 (DYLIHTFANVCIRSWPLRL) the chain is on the cytoplasmic side. A helical transmembrane segment spans residues 377–397 (LYRALTWAHTQLIIAYIMLAV). Over 398–407 (EGRSLSSLCQ) the chain is Lumenal. Residues 408–428 (LCCSYNSLFPVMYGLLLFLLA) traverse the membrane as a helical segment. At 429 to 435 (ERKDKRN) the chain is on the cytoplasmic side.

This sequence belongs to the membrane-bound acyltransferase family. Monomer. Not glycosylated. Highly expressed in stomach and pancreas. Lower expression in small intestine and colon. Very low expression in testis.

The protein localises to the endoplasmic reticulum membrane. The catalysed reaction is octanoyl-CoA + L-seryl-[protein] = O-octanoyl-L-seryl-[protein] + CoA. It carries out the reaction hexanoyl-CoA + L-seryl-[protein] = O-hexanoyl-L-seryl-[protein] + CoA. It catalyses the reaction decanoyl-CoA + L-seryl-[protein] = O-decanoyl-L-seryl-[protein] + CoA. The enzyme catalyses L-seryl-[protein] + acetyl-CoA = O-acetyl-L-seryl-[protein] + CoA. The catalysed reaction is L-seryl-[protein] + butanoyl-CoA = O-butanoyl-L-seryl-[protein] + CoA. It carries out the reaction pentanoyl-CoA + L-seryl-[protein] = O-pentanoyl-L-seryl-[protein] + CoA. It catalyses the reaction heptanoyl-CoA + L-seryl-[protein] = O-heptanoyl-L-seryl-[protein] + CoA. The enzyme catalyses nonanoyl-CoA + L-seryl-[protein] = O-nonanoyl-L-seryl-[protein] + CoA. The catalysed reaction is L-seryl-[protein] + dodecanoyl-CoA = O-dodecanoyl-L-seryl-[protein] + CoA. It carries out the reaction L-seryl-[protein] + tetradecanoyl-CoA = O-tetradecanoyl-L-seryl-[protein] + CoA. It catalyses the reaction a fatty acyl-CoA + L-seryl-[protein] = O-fatty acyl-L-seryl-[protein] + CoA. With respect to regulation, inhibited by 1-[2-cyano-3,12-dioxooleana-1,9(11)- dien-28-oyl]ethylamide (CDDO-EA) with an IC(50) of 60 uM. Inhibited by Fe3+ and Cu2+ and the O-acyltransferase activity is completely blocked over 5 mM Fe3+ and 0.5 mM Cu2+. In terms of biological role, catalyzes ghrelin acylation at 'Ser-3' using preferentially octanoyl-CoA, hexanoyl-CoA and decanoyl-CoA as acyl-CoA donors leading to ghrelin activity. In vitro also uses acyl-CoA donors of different lengths from short-chain (C2) to long-chain fatty acids (C16) knowing that acyl-CoA donors from butanoyl-CoA (C4) to dodecanoyl-CoA (C12) are more efficient compared to longer acyl-CoA donors, such as myristoyl-CoA (C14) and palmitoyl-CoA (C16) that are not efficient. Its function is as follows. Inactive octanoyltransferase activity. The polypeptide is Membrane-bound ghrelin O-acyltransferase MBOAT4 (Mus musculus (Mouse)).